Reading from the N-terminus, the 1106-residue chain is Zinc finger protein GLI1 (1106 aa).

The interval 1 to 20 (MFNSMTPPPISSYGEPCCLR) is SNAG domain. The segment at 120 to 124 (SYGHL) is interaction with SUFU. 5 consecutive C2H2-type zinc fingers follow at residues 235-260 (TDCR…NSEH), 268-295 (FVCH…MRRH), 301-325 (HKCT…LRSH), 331-356 (YMCE…NRTH), and 362-387 (YVCK…KTVH). An interaction with DNA region spans residues 283–291 (KAQYMLVVH). Interaction with DNA stretches follow at residues 345-350 (ASDRAK) and 375-381 (DPSSLRK). Disordered stretches follow at residues 375–485 (DPSS…DEGP), 516–580 (GLKL…SLPG), 732–792 (YGGP…LYPG), 817–889 (EQGC…PTHS), and 914–942 (GRED…SRAK). Over residues 413–428 (EPKREREGGPIREESR) the composition is skewed to basic and acidic residues. A compositionally biased stretch (polar residues) spans 442-463 (PGAQSSCSSDHSPAGSAANTDS). Lys-518 is modified (N6-acetyllysine). 2 stretches are compositionally biased toward low complexity: residues 544 to 560 (SSSS…RRSS) and 737 to 753 (GAAA…SLPL). A compositionally biased stretch (pro residues) spans 754–766 (GPGPPTNYGPNPC). The span at 768 to 779 (QQASYPDPTQET) shows a compositional bias: polar residues. Residue Lys-1003 forms a Glycyl lysine isopeptide (Lys-Gly) (interchain with G-Cter in SUMO2) linkage. Positions 1054–1087 (DEPQGLSPPPSHDQRGSSGHTPPPSGPPNMAVGN) are disordered.

Belongs to the GLI C2H2-type zinc-finger protein family. As to quaternary structure, interacts with KIF7. Interacts with STK36. Interacts with ZIC1; the interaction enhances transcription activation. Interacts with SUFU; this inhibits transcriptional activation by GLI1. Phosphorylated in vitro by ULK3. Post-translationally, acetylation at Lys-518 down-regulates transcriptional activity. Deacetylated by HDAC1. In terms of processing, ubiquitinated by the CRL2(FEM1B) complex, suppressing GLI1 transcriptional activator activity. As to expression, detected in testis (at protein level). Testis, myometrium and fallopian tube. Also expressed in the brain with highest expression in the cerebellum, optic nerve and olfactory tract. Isoform 1 is detected in brain, spleen, pancreas, liver, kidney and placenta; isoform 2 is not detectable in these tissues.

The protein localises to the cytoplasm. The protein resides in the nucleus. Functionally, acts as a transcriptional activator. Binds to the DNA consensus sequence 5'-GACCACCCA-3'. Regulates the transcription of specific genes during normal development. Plays a role in craniofacial development and digital development, as well as development of the central nervous system and gastrointestinal tract. Mediates SHH signaling. Plays a role in cell proliferation and differentiation via its role in SHH signaling. Acts as a transcriptional activator, but activates a different set of genes than isoform 1. Activates expression of CD24, unlike isoform 1. Mediates SHH signaling. Promotes cancer cell migration. This chain is Zinc finger protein GLI1 (GLI1), found in Homo sapiens (Human).